The following is a 389-amino-acid chain: Gastricsin (389 aa).

Residues 1–16 (MKWMVVALVCLQLLEA) form the signal peptide. The propeptide at 17 to 59 (KVTKVTLKKFKSIRENLREQGLLEDFLKTNHYDPAQKYHFGDF) is activation peptide. The Peptidase A1 domain occupies 73 to 386 (YFGEISIGTP…DMGNNRVGFA (314 aa)). The active site involves D91. 2 cysteine pairs are disulfide-bonded: C104–C109 and C268–C272. D277 is an active-site residue. A disulfide bond links C311 and C344.

It belongs to the peptidase A1 family.

Its subcellular location is the secreted. It carries out the reaction More restricted specificity than pepsin A, but shows preferential cleavage at Tyr-|-Xaa bonds. High activity on hemoglobin.. Hydrolyzes a variety of proteins. The protein is Gastricsin (PGC) of Suncus murinus (Asian house shrew).